Reading from the N-terminus, the 72-residue chain is Translation initiation factor IF-1 (72 aa).

In terms of domain architecture, S1-like spans 1 to 72; sequence MAKEDVIEFS…TKGRITFRYK (72 aa).

This sequence belongs to the IF-1 family. Component of the 30S ribosomal translation pre-initiation complex which assembles on the 30S ribosome in the order IF-2 and IF-3, IF-1 and N-formylmethionyl-tRNA(fMet); mRNA recruitment can occur at any time during PIC assembly.

Its subcellular location is the cytoplasm. Its function is as follows. One of the essential components for the initiation of protein synthesis. Stabilizes the binding of IF-2 and IF-3 on the 30S subunit to which N-formylmethionyl-tRNA(fMet) subsequently binds. Helps modulate mRNA selection, yielding the 30S pre-initiation complex (PIC). Upon addition of the 50S ribosomal subunit IF-1, IF-2 and IF-3 are released leaving the mature 70S translation initiation complex. This Paramagnetospirillum magneticum (strain ATCC 700264 / AMB-1) (Magnetospirillum magneticum) protein is Translation initiation factor IF-1.